The primary structure comprises 278 residues: Serine/threonine-protein phosphatase PGAM5, mitochondrial (278 aa).

The chain crosses the membrane as a helical span at residues 7–27; sequence LIAGGSAAAAAAAILGAAAVG.

It belongs to the phosphoglycerate mutase family. BPG-dependent PGAM subfamily. In terms of processing, phosphorylated by the RIPK1/RIPK3 complex under necrotic conditions. This phosphorylation increases PGAM5 phosphatase activity.

The protein localises to the mitochondrion outer membrane. It carries out the reaction O-phospho-L-seryl-[protein] + H2O = L-seryl-[protein] + phosphate. The enzyme catalyses O-phospho-L-threonyl-[protein] + H2O = L-threonyl-[protein] + phosphate. Its function is as follows. Displays phosphatase activity for serine/threonine residues. Has apparently no phosphoglycerate mutase activity. May be regulator of mitochondrial dynamics. May be a central mediator for programmed necrosis. The polypeptide is Serine/threonine-protein phosphatase PGAM5, mitochondrial (pgam5) (Xenopus tropicalis (Western clawed frog)).